The primary structure comprises 793 residues: Protein smoothened (793 aa).

The N-terminal stretch at 1-30 (MAAGRPVRGPELAPRRLLQLLLLVLLGGRG) is a signal peptide. At 31–237 (RGAALSGNVT…EAEHQDMHSY (207 aa)) the chain is on the extracellular side. The interval 35 to 61 (LSGNVTGPGPRSAGGSARRNAPVTSPP) is disordered. N-linked (GlcNAc...) asparagine glycosylation occurs at Asn-38. 5 cysteine pairs are disulfide-bonded: Cys-68-Cys-182, Cys-74-Cys-138, Cys-82-Cys-131, Cys-122-Cys-158, and Cys-151-Cys-173. Residues 69–185 (GRAAHCEPLR…DHFPEGCPNE (117 aa)) enclose the FZ domain. Residue Asp-99 coordinates cholesterol. A glycan (N-linked (GlcNAc...) asparagine) is linked at Asn-192. 3 cysteine pairs are disulfide-bonded: Cys-197–Cys-217, Cys-221–Cys-299, and Cys-318–Cys-394. A helical membrane pass occupies residues 238-258 (IAAFGAVTGLCTLFTLATFVA). At 259–266 (DWRNSNRY) the chain is on the cytoplasmic side. A helical membrane pass occupies residues 267–287 (PAVILFYVNACFFVGSIGWLA). The Extracellular segment spans residues 288-318 (QFMDGARREIVCRADGTMRFGEPTSSETLSC). The helical transmembrane segment at 319–339 (VIIFVIVYYALMAGVVWFVVL) threads the bilayer. Over 340–362 (TYAWHTSFKALGTTYQPLSGKTS) the chain is Cytoplasmic. The helical transmembrane segment at 363-383 (YFHLLTWSLPFVLTVAILAVA) threads the bilayer. The Extracellular segment spans residues 384-406 (QVDGDSVSGICFVGYKNYRYRAG). Cholesterol is bound at residue Tyr-398. A helical membrane pass occupies residues 407–427 (FVLAPIGLVLIVGGYFLIRGV). Topologically, residues 428–455 (MTLFSIKSNHPGLLSEKAASKINETMLR) are cytoplasmic. Residues 456 to 476 (LGIFGFLAFGFVLITFSCHFY) traverse the membrane as a helical segment. Over 477–528 (DFFNQAEWERSFRDYVLCQANVTIGLPTKKPIPDCEIKNRPSLLVEKINLFA) the chain is Extracellular. A disulfide bridge links Cys-494 with Cys-511. N-linked (GlcNAc...) asparagine glycosylation is present at Asn-497. A helical membrane pass occupies residues 529-549 (MFGTGIAMSTWVWTKATLLIW). An interaction with BBS5 and BBS7 region spans residues 542 to 573 (TKATLLIWRRTWCRLTGHSDDEPKRIKKSKMI). The Cytoplasmic portion of the chain corresponds to 550 to 793 (RRTWCRLTGH…AELLDADSDF (244 aa)). Ser-560, Ser-578, and Ser-594 each carry phosphoserine. A required for interaction with PRKACA region spans residues 574-657 (AKAFSKRREL…TPVPPEEQAN (84 aa)). The segment at 585–597 (QNPGQELSFSMHT) is interaction with DLG5. Phosphothreonine is present on Thr-597. 2 positions are modified to phosphoserine: Ser-599 and Ser-642. Thr-644 and Thr-648 each carry phosphothreonine. Ser-666 carries the phosphoserine modification. The segment covering 674–684 (GRKKKRRKRKK) has biased composition (basic residues). The disordered stretch occupies residues 674–702 (GRKKKRRKRKKEVCPLGPAPELHHSAPVP).

Belongs to the G-protein coupled receptor Fz/Smo family. In terms of assembly, homodimer. Interacts (via C-terminus) with protein kinase A catalytic subunit PRKACA; interacts with free PRKACA subunits and the interaction leads to sequestration of PRKACA at the membrane, preventing PRKACA-mediated phosphorylation of GLI transcription factors. Interacts with ARRB2. Interacts with KIF7. Interacts with BBS5 and BBS7; the interactions are indicative for the association of SMO with the BBsome complex to facilitate ciliary localization of SMO. Interacts with DLG5 and SDCBP. Interacts with GAS8/DRC4. In terms of processing, phosphorylation by GRK kinases is required for interaction with protein kinase A catalytic subunit PRKACA. As to expression, in embryo, found in the early neural folds and neural tube, pre-somitic mesoderm and somites, developing limb bud, gut, eye, testes, cartilage, muscle, lung, epiglottis, thymus, tongue, jaw, taste buds, teeth, and skin. In adult, found in multiple tissues including heart, brain, liver, lung, skeletal muscle, kidney and testis.

The protein resides in the cell membrane. It is found in the cell projection. It localises to the cilium. In terms of biological role, g protein-coupled receptor which associates with the patched protein (PTCH) to transduce hedgehog protein signaling. Binding of sonic hedgehog (SHH) to its receptor patched prevents inhibition of smoothened (SMO) by patched. When active, SMO binds to and sequesters protein kinase A catalytic subunit PRKACA at the cell membrane, preventing PRKACA-mediated phosphorylation of GLI transcription factors which releases the GLI proteins from PRKACA-mediated inhibition and allows for transcriptional activation of hedgehog pathway target genes. Required for the accumulation of KIF7, GLI2 and GLI3 in the cilia. Interacts with DLG5 at the ciliary base to induce the accumulation of KIF7 and GLI2 at the ciliary tip for GLI2 activation. This chain is Protein smoothened (Smo), found in Rattus norvegicus (Rat).